The chain runs to 294 residues: Cytidine deaminase (294 aa).

CMP/dCMP-type deaminase domains lie at 48–168 (DEDA…FGPK) and 186–294 (LTGD…VLLG). 89–91 (NME) serves as a coordination point for substrate. His-102 contacts Zn(2+). Glu-104 functions as the Proton donor in the catalytic mechanism. The Zn(2+) site is built by Cys-129 and Cys-132.

The protein belongs to the cytidine and deoxycytidylate deaminase family. Homodimer. It depends on Zn(2+) as a cofactor.

The enzyme catalyses cytidine + H2O + H(+) = uridine + NH4(+). The catalysed reaction is 2'-deoxycytidine + H2O + H(+) = 2'-deoxyuridine + NH4(+). Its function is as follows. This enzyme scavenges exogenous and endogenous cytidine and 2'-deoxycytidine for UMP synthesis. The polypeptide is Cytidine deaminase (Salmonella paratyphi A (strain ATCC 9150 / SARB42)).